The primary structure comprises 386 residues: Succinate--CoA ligase [ADP-forming] subunit beta (386 aa).

The 236-residue stretch at 9–244 (KQVLRSSNLN…DSQIDAKEAA (236 aa)) folds into the ATP-grasp domain. Residues Lys46, 53–55 (GRG), Glu99, Leu102, and Glu107 contribute to the ATP site. Asn199 and Asp213 together coordinate Mg(2+). Substrate is bound by residues Asn264 and 321 to 323 (GIV).

This sequence belongs to the succinate/malate CoA ligase beta subunit family. Heterotetramer of two alpha and two beta subunits. The cofactor is Mg(2+).

The enzyme catalyses succinate + ATP + CoA = succinyl-CoA + ADP + phosphate. It catalyses the reaction GTP + succinate + CoA = succinyl-CoA + GDP + phosphate. Its pathway is carbohydrate metabolism; tricarboxylic acid cycle; succinate from succinyl-CoA (ligase route): step 1/1. In terms of biological role, succinyl-CoA synthetase functions in the citric acid cycle (TCA), coupling the hydrolysis of succinyl-CoA to the synthesis of either ATP or GTP and thus represents the only step of substrate-level phosphorylation in the TCA. The beta subunit provides nucleotide specificity of the enzyme and binds the substrate succinate, while the binding sites for coenzyme A and phosphate are found in the alpha subunit. The chain is Succinate--CoA ligase [ADP-forming] subunit beta from Thiobacillus denitrificans (strain ATCC 25259 / T1).